Here is a 271-residue protein sequence, read N- to C-terminus: Phosphonates import ATP-binding protein PhnC 2 (271 aa).

The ABC transporter domain maps to L2–E246. G35–S42 contributes to the ATP binding site. Over residues R243–P254 the composition is skewed to basic and acidic residues. A disordered region spans residues R243–D271.

The protein belongs to the ABC transporter superfamily. Phosphonates importer (TC 3.A.1.9.1) family. As to quaternary structure, the complex is composed of two ATP-binding proteins (PhnC), two transmembrane proteins (PhnE) and a solute-binding protein (PhnD).

It localises to the cell membrane. It carries out the reaction phosphonate(out) + ATP + H2O = phosphonate(in) + ADP + phosphate + H(+). Functionally, part of the ABC transporter complex PhnCDE involved in phosphonates import. Responsible for energy coupling to the transport system. This chain is Phosphonates import ATP-binding protein PhnC 2, found in Haloarcula marismortui (strain ATCC 43049 / DSM 3752 / JCM 8966 / VKM B-1809) (Halobacterium marismortui).